A 394-amino-acid chain; its full sequence is tRNA-specific 2-thiouridylase MnmA (394 aa).

ATP contacts are provided by residues 13–20 and M39; that span reads GLSGGVDS. An interaction with target base in tRNA region spans residues 99-101; that stretch reads NPD. The active-site Nucleophile is C104. A disulfide bond links C104 and C202. G128 is a binding site for ATP. The interaction with tRNA stretch occupies residues 152–154; it reads KDQ. The active-site Cysteine persulfide intermediate is the C202. An interaction with tRNA region spans residues 329-330; that stretch reads RY.

Belongs to the MnmA/TRMU family.

The protein resides in the cytoplasm. It catalyses the reaction S-sulfanyl-L-cysteinyl-[protein] + uridine(34) in tRNA + AH2 + ATP = 2-thiouridine(34) in tRNA + L-cysteinyl-[protein] + A + AMP + diphosphate + H(+). In terms of biological role, catalyzes the 2-thiolation of uridine at the wobble position (U34) of tRNA, leading to the formation of s(2)U34. The chain is tRNA-specific 2-thiouridylase MnmA from Polaromonas naphthalenivorans (strain CJ2).